Here is a 121-residue protein sequence, read N- to C-terminus: Chorion protein S15 (121 aa).

A signal peptide spans 1 to 18 (MKYLFVCVSLALFAYISA).

This sequence belongs to the chorion protein S15/S18 family.

It localises to the secreted. In terms of biological role, chorion membrane (egg shell) protein; plays a role in protecting the egg from the environment. This chain is Chorion protein S15 (Cp15), found in Drosophila subobscura (Fruit fly).